The sequence spans 518 residues: 2-isopropylmalate synthase (518 aa).

A Pyruvate carboxyltransferase domain is found at 5 to 267 (VIIFDTTLRD…STNIKHKEIY (263 aa)). Residues Asp-14, His-202, His-204, and Asn-238 each contribute to the Mn(2+) site. Residues 392 to 518 (SLSFFSVQSI…KLKTLKKVNN (127 aa)) are regulatory domain.

Belongs to the alpha-IPM synthase/homocitrate synthase family. LeuA type 1 subfamily. As to quaternary structure, homodimer. The cofactor is Mn(2+).

The protein localises to the cytoplasm. It catalyses the reaction 3-methyl-2-oxobutanoate + acetyl-CoA + H2O = (2S)-2-isopropylmalate + CoA + H(+). It participates in amino-acid biosynthesis; L-leucine biosynthesis; L-leucine from 3-methyl-2-oxobutanoate: step 1/4. Its function is as follows. Catalyzes the condensation of the acetyl group of acetyl-CoA with 3-methyl-2-oxobutanoate (2-ketoisovalerate) to form 3-carboxy-3-hydroxy-4-methylpentanoate (2-isopropylmalate). The chain is 2-isopropylmalate synthase from Buchnera aphidicola subsp. Schizaphis graminum (strain Sg).